We begin with the raw amino-acid sequence, 321 residues long: Probable GDP-L-fucose synthase (321 aa).

8–14 (GGTGLVG) contributes to the NADP(+) binding site. The Proton donor/acceptor role is filled by Tyr-136. NADP(+) contacts are provided by residues Lys-140, 163 to 166 (PCNI), and His-179. Residues Arg-187, Arg-215, and Asp-277 each contribute to the substrate site.

Belongs to the NAD(P)-dependent epimerase/dehydratase family. Fucose synthase subfamily. As to quaternary structure, homodimer.

The catalysed reaction is GDP-beta-L-fucose + NADP(+) = GDP-4-dehydro-alpha-D-rhamnose + NADPH + H(+). The protein operates within nucleotide-sugar biosynthesis; GDP-L-fucose biosynthesis via de novo pathway; GDP-L-fucose from GDP-alpha-D-mannose: step 2/2. Its function is as follows. Catalyzes the two-step NADP-dependent conversion of GDP-4-dehydro-6-deoxy-D-mannose to GDP-fucose, involving an epimerase and a reductase reaction. In Drosophila melanogaster (Fruit fly), this protein is Probable GDP-L-fucose synthase (Gmer).